An 828-amino-acid chain; its full sequence is Hapless 2 (828 aa).

The first 32 residues, 1–32, serve as a signal peptide directing secretion; that stretch reads MKNKLINLRSKHIYKLIIIIFFCIILKYYKWC. Over 33 to 680 the chain is Extracellular; that stretch reads DFKNKVFFIQ…INTVKTLIGK (648 aa). Cys-53 and Cys-62 are oxidised to a cystine. N-linked (GlcNAc...) asparagine glycosylation occurs at Asn-74. Intrachain disulfides connect Cys-142–Cys-209, Cys-170–Cys-381, Cys-172–Cys-191, and Cys-363–Cys-388. A cd loop; involved in gamete fusion region spans residues 174–191; the sequence is TYNYFKDDEFIKRAKLKC. 5 N-linked (GlcNAc...) asparagine glycosylation sites follow: Asn-233, Asn-250, Asn-264, Asn-293, and Asn-333. N-linked (GlcNAc...) asparagine glycans are attached at residues Asn-479, Asn-516, Asn-531, and Asn-539. Cys-546 and Cys-592 form a disulfide bridge. Residues 681 to 701 form a helical membrane-spanning segment; sequence FAIIAILIILAPALIPLLPFF. Residues 702–828 are Cytoplasmic-facing; the sequence is LNFFFLFIST…SGKSKIPPLR (127 aa). A disordered region spans residues 773 to 828; it reads RKNKKKFNKNNISSNIKHKKGGKKVKQKEPNRNSNHTSHEYADTSPSGKSKIPPLR. A compositionally biased stretch (basic residues) spans 788–798; the sequence is IKHKKGGKKVK. Residues 799 to 814 are compositionally biased toward basic and acidic residues; that stretch reads QKEPNRNSNHTSHEYA.

It belongs to the HAP2/GCS1 family.

Its subcellular location is the cell membrane. In terms of biological role, during fertilization, required on male gametes for their fusion with female gametes, and for subsequent ookinete formation in the host. Thereby, required for mosquito-mediated transmission to other animals. Probably initiates the fusion of gamete cell membranes by inserting part of its extracellular domain into the cell membrane of a female gamete. The polypeptide is Hapless 2 (Plasmodium berghei (strain Anka)).